The following is a 130-amino-acid chain: Glycine cleavage system H protein (130 aa).

A Lipoyl-binding domain is found at 22–103 (KAYIGISDCA…PYGSWIAAIE (82 aa)). Lys63 is subject to N6-lipoyllysine.

This sequence belongs to the GcvH family. As to quaternary structure, the glycine cleavage system is composed of four proteins: P, T, L and H. (R)-lipoate serves as cofactor.

In terms of biological role, the glycine cleavage system catalyzes the degradation of glycine. The H protein shuttles the methylamine group of glycine from the P protein to the T protein. The chain is Glycine cleavage system H protein from Clostridium botulinum (strain Okra / Type B1).